The following is a 301-amino-acid chain: Pseudouridine-5'-phosphate glycosidase (301 aa).

Catalysis depends on Glu-23, which acts as the Proton donor. Substrate is bound by residues Lys-84 and Val-104. Asp-136 is a binding site for Mn(2+). 138-140 (SRD) contributes to the substrate binding site. Residue Lys-157 is the Nucleophile of the active site.

It belongs to the pseudouridine-5'-phosphate glycosidase family. In terms of assembly, homotrimer. Requires Mn(2+) as cofactor.

The enzyme catalyses D-ribose 5-phosphate + uracil = psi-UMP + H2O. Functionally, catalyzes the reversible cleavage of pseudouridine 5'-phosphate (PsiMP) to ribose 5-phosphate and uracil. Functions biologically in the cleavage direction, as part of a pseudouridine degradation pathway. The protein is Pseudouridine-5'-phosphate glycosidase of Mycoplasmopsis agalactiae (strain NCTC 10123 / CIP 59.7 / PG2) (Mycoplasma agalactiae).